The following is a 326-amino-acid chain: MASKVSCLYVLTVVCWASALWYLSITRPTSSYTGSKPFSHLTVARKNFTFGNIRTRPINPHSFEFLINEPNKCEKNIPFLVILISTTHKEFDARQAIRETWGDENNFKGIKIATLFLLGKNADPVLNQMVEQESQIFHDIIVEDFIDSYHNLTLKTLMGMRWVATFCSKAKYVMKTDSDIFVNMDNLIYKLLKPSTKPRRRYFTGYVINGGPIRDVRSKWYMPRDLYPDSNYPPFCSGTGYIFSADVAELIYKTSLHTRLLHLEDVYVGLCLRKLGIHPFQNSGFNHWKMAYSLCRYRRVITVHQISPEEMHRIWNDMSSKKHLRC.

At Met1–Ser6 the chain is on the cytoplasmic side. A helical; Signal-anchor for type II membrane protein membrane pass occupies residues Cys7–Thr26. Topologically, residues Arg27–Cys326 are lumenal. Residues Asn47 and Asn151 are each glycosylated (N-linked (GlcNAc...) asparagine).

The protein belongs to the glycosyltransferase 31 family. The cofactor is Mn(2+).

Its subcellular location is the golgi apparatus membrane. It carries out the reaction an N-acetyl-beta-D-glucosaminyl derivative + UDP-alpha-D-galactose = a beta-D-galactosyl-(1-&gt;3)-N-acetyl-beta-D-glucosaminyl derivative + UDP + H(+). The enzyme catalyses a beta-D-GlcNAc-(1-&gt;3)-beta-D-Gal-(1-&gt;4)-beta-D-Glc-(1&lt;-&gt;1)-Cer(d18:1(4E)) + UDP-alpha-D-galactose = a beta-D-Gal-(1-&gt;3)-beta-D-GlcNAc-(1-&gt;3)-beta-D-Gal-(1-&gt;4)-beta-D-Glc-(1&lt;-&gt;1')-Cer(d18:1(4E)) + UDP + H(+). The protein operates within protein modification; protein glycosylation. Its function is as follows. Beta-1,3-galactosyltransferase that transfers galactose from UDP-galactose to substrates with a terminal beta-N-acetylglucosamine (beta-GlcNAc) residue. Involved in the biosynthesis of the carbohydrate moieties of glycolipids and glycoproteins. In Gorilla gorilla gorilla (Western lowland gorilla), this protein is Beta-1,3-galactosyltransferase 1 (B3GALT1).